We begin with the raw amino-acid sequence, 573 residues long: Solute carrier family 41 member 2 (573 aa).

Over Met1–Gln162 the chain is Extracellular. Ser136 and Ser137 each carry phosphoserine. A helical transmembrane segment spans residues Ile163 to Ile183. At Val184 to Glu195 the chain is on the cytoplasmic side. The chain crosses the membrane as a helical span at residues Val196–Ser216. The Extracellular segment spans residues Arg217 to Gln245. Residues Val246–Pro266 traverse the membrane as a helical segment. Over Glu267–Ser282 the chain is Cytoplasmic. A helical transmembrane segment spans residues Val283 to Gly303. The Extracellular segment spans residues Ser304–Asn313. Residues Val314–Ile334 traverse the membrane as a helical segment. Residues Ser335–Tyr347 are Cytoplasmic-facing. Residues Ile348–Ala368 traverse the membrane as a helical segment. The Extracellular segment spans residues Lys369 to Val376. Residues Leu377–Ile397 form a helical membrane-spanning segment. Over Leu398–Asn406 the chain is Cytoplasmic. Residues Leu407–Ile427 traverse the membrane as a helical segment. Topologically, residues Gln428 to Ala469 are extracellular. A helical membrane pass occupies residues Gln470–Met490. Topologically, residues Lys491–Thr498 are cytoplasmic. A helical transmembrane segment spans residues Ile499 to Ile519. Residues Ala520–Thr543 are Extracellular-facing. Residues Ala544–Ile564 form a helical membrane-spanning segment. The Cytoplasmic portion of the chain corresponds to Gly565–Asp573.

The protein belongs to the SLC41A transporter family.

The protein localises to the cell membrane. It carries out the reaction Mg(2+)(in) = Mg(2+)(out). The catalysed reaction is Mn(2+)(in) = Mn(2+)(out). It catalyses the reaction Co(2+)(in) = Co(2+)(out). The enzyme catalyses Ni(2+)(in) = Ni(2+)(out). It carries out the reaction Fe(2+)(in) = Fe(2+)(out). Functionally, acts as a plasma-membrane magnesium transporter. Can also mediate the transport of other divalent metal cations in an order of Ba(2+) &gt; Ni(2+) &gt; Co(2+) &gt; Fe(2+) &gt; Mn(2+). This chain is Solute carrier family 41 member 2 (SLC41A2), found in Homo sapiens (Human).